Here is a 149-residue protein sequence, read N- to C-terminus: uncharacterized protein (149 aa).

The helical transmembrane segment at 12-31 (FKNLVIGAVSGVAAAYFLST) threads the bilayer.

Its subcellular location is the membrane. This is an uncharacterized protein from Streptococcus pyogenes serotype M6 (strain ATCC BAA-946 / MGAS10394).